The following is a 139-amino-acid chain: Large-conductance mechanosensitive channel (139 aa).

Helical transmembrane passes span 19 to 39 (VGVI…ADII), 40 to 60 (MPIV…LPLS), and 81 to 101 (GNFL…FMVI).

It belongs to the MscL family. As to quaternary structure, homopentamer.

It is found in the cell inner membrane. Channel that opens in response to stretch forces in the membrane lipid bilayer. May participate in the regulation of osmotic pressure changes within the cell. The sequence is that of Large-conductance mechanosensitive channel from Nitrobacter winogradskyi (strain ATCC 25391 / DSM 10237 / CIP 104748 / NCIMB 11846 / Nb-255).